Here is a 206-residue protein sequence, read N- to C-terminus: Putative acetyltransferase OgpAT (206 aa).

One can recognise an N-acetyltransferase domain in the interval Val5–Asp205. Residues His135–Leu138, Gly144–Gly148, Asn175–Arg177, and His184 contribute to the acetyl-CoA site.

This sequence belongs to the acetyltransferase family. As to quaternary structure, monomer.

Its function is as follows. Binds acetyl-CoA, but not butyryl-CoA or decanoyl-CoA. May have acetyltransferase activity. The sequence is that of Putative acetyltransferase OgpAT from Oceanicola granulosus (strain ATCC BAA-861 / DSM 15982 / KCTC 12143 / HTCC2516).